Consider the following 384-residue polypeptide: Zinc finger protein GLIS2 homolog (384 aa).

Residues 128–153 (FVCNWTDCDRVFDTLDALAQHVTQRH) form a C2H2-type 1 zinc finger. The C2H2-type 2; degenerate zinc-finger motif lies at 163 to 190 (YYCRWRGCQRSERGFNARYKMLVHTRTH). C2H2-type zinc fingers lie at residues 196 to 218 (HRCH…IRSH), 224 to 248 (YKCS…TRTH), and 254 to 280 (YMCK…TFKH). A disordered region spans residues 321 to 343 (SSSSARYYDDSNNEPSDYSLKPK).

This sequence belongs to the GLI C2H2-type zinc-finger protein family.

The protein localises to the nucleus. Functionally, transcription factor which represses a set of lipase genes involved in fat catabolism. This chain is Zinc finger protein GLIS2 homolog (sug), found in Drosophila melanogaster (Fruit fly).